Here is a 524-residue protein sequence, read N- to C-terminus: Cytochrome c nitrite reductase subunit NrfA (524 aa).

Positions 1 to 24 (MNNQKTFKGLRLAALGLVAVAAFT) are cleaved as a signal peptide. The tract at residues 29 to 39 (DVSTELKTPVY) is interaction with NrfH. 3 residues coordinate Ca(2+): G78, E117, and A118. Positions 121, 147, 150, 151, 187, 190, and 191 each coordinate heme. The interaction with NrfH stretch occupies residues 221–222 (RN). The heme site is built by C229, C232, and H233. 4 residues coordinate Ca(2+): E235, Y236, K295, and Q297. Residues H309, C316, C319, H320, H335, C349, C352, H353, and H434 each contribute to the heme site. Positions 318–331 (DCHMSYTRSDDKKK) are interaction with NrfH. Residues 351-355 (QCHSD) form an interaction with NrfH region.

This sequence belongs to the cytochrome c-552 family. Component of the NrfHA cytochrome c nitrite reductase complex composed of 4 NrfA catalytic subunits and 2 NrfH quinone-binding subunits. NrfA homodimer interacts with NrfH. The cofactor is Ca(2+). It depends on heme as a cofactor.

The protein resides in the cell inner membrane. The enzyme catalyses 6 Fe(III)-[cytochrome c] + NH4(+) + 2 H2O = 6 Fe(II)-[cytochrome c] + nitrite + 8 H(+). Functionally, catalytic subunit of the cytochrome c nitrite reductase holocomplex NrfHA. Has both nitrite and sulfite reductase activities. Catalyzes the reduction of nitrite to ammonia, consuming six electrons acquired by the electron donor subunit NrfH from the menaquinone pool, in an anaerobic respiratory process of nitrite. The other biological function of the NrfHA holocomplex is to detoxify nitrite. This function is essential for the survival of this organism as it enables it to overcome inhibition by nitrite, which is produced by other organisms living in the same environment. The chain is Cytochrome c nitrite reductase subunit NrfA from Nitratidesulfovibrio vulgaris (strain ATCC 29579 / DSM 644 / CCUG 34227 / NCIMB 8303 / VKM B-1760 / Hildenborough) (Desulfovibrio vulgaris).